A 269-amino-acid chain; its full sequence is uncharacterized protein (269 aa).

15–41 contacts NADP(+); it reads QKSVLITGCSSGIGLESALELKRQGFH. Ser-146 lines the substrate pocket. The active-site Proton acceptor is the Tyr-159.

Belongs to the short-chain dehydrogenases/reductases (SDR) family.

This is an uncharacterized protein from Escherichia coli O6:H1 (strain CFT073 / ATCC 700928 / UPEC).